The following is a 256-amino-acid chain: Ribosomal RNA small subunit methyltransferase A (256 aa).

S-adenosyl-L-methionine is bound by residues Asn12, Leu14, Gly39, Glu60, Asp85, and Asn103.

This sequence belongs to the class I-like SAM-binding methyltransferase superfamily. rRNA adenine N(6)-methyltransferase family. RsmA subfamily.

It localises to the cytoplasm. It carries out the reaction adenosine(1518)/adenosine(1519) in 16S rRNA + 4 S-adenosyl-L-methionine = N(6)-dimethyladenosine(1518)/N(6)-dimethyladenosine(1519) in 16S rRNA + 4 S-adenosyl-L-homocysteine + 4 H(+). Specifically dimethylates two adjacent adenosines (A1518 and A1519) in the loop of a conserved hairpin near the 3'-end of 16S rRNA in the 30S particle. May play a critical role in biogenesis of 30S subunits. The polypeptide is Ribosomal RNA small subunit methyltransferase A (Legionella pneumophila (strain Corby)).